We begin with the raw amino-acid sequence, 76 residues long: Exodeoxyribonuclease 7 small subunit (76 aa).

It belongs to the XseB family. In terms of assembly, heterooligomer composed of large and small subunits.

The protein localises to the cytoplasm. It catalyses the reaction Exonucleolytic cleavage in either 5'- to 3'- or 3'- to 5'-direction to yield nucleoside 5'-phosphates.. Its function is as follows. Bidirectionally degrades single-stranded DNA into large acid-insoluble oligonucleotides, which are then degraded further into small acid-soluble oligonucleotides. In Bacillus cytotoxicus (strain DSM 22905 / CIP 110041 / 391-98 / NVH 391-98), this protein is Exodeoxyribonuclease 7 small subunit.